Reading from the N-terminus, the 381-residue chain is MAVPTLSETLTTLLHRVLQGEDLTPEEGVFLLQQWDPEALTVIRQTSDRLRQQQVGDTVTYVVNRNINFTNICEQHCSFCAFRRDEDQPGAYWLGFDEILAKTGEAVERGATEICMQGGLHPGAKLQGHSLAYYLKLVETIKTTFPTLHLHAFSPQEVQFIAREDGLSYAQVITALRDAGVNSMPGTAAEVLVDEVRRVICPEKINTATWLEIISTAHALGVPTTSTMLSGQIETPQQQIEHLFLLRSLQQKAIQQDYPARFTEFILLPYVGQSAPKPLRKRVGRDQPVLQDALLLTAVARIFLGNWIVNHQPSWVKLGLAGATEALIWGCNDLGGTLMEEHITSMAGAQGGTCRSVENLQQAIASLNRPYRERTTLYGYL.

The 248-residue stretch at 59–306 (VTYVVNRNIN…TAVARIFLGN (248 aa)) folds into the Radical SAM core domain. Cysteine 73, cysteine 77, and cysteine 80 together coordinate [4Fe-4S] cluster.

Belongs to the radical SAM superfamily. CofH family. In terms of assembly, consists of two subunits, CofG and CofH. Requires [4Fe-4S] cluster as cofactor.

It catalyses the reaction 5-amino-6-(D-ribitylamino)uracil + L-tyrosine + S-adenosyl-L-methionine = 5-amino-5-(4-hydroxybenzyl)-6-(D-ribitylimino)-5,6-dihydrouracil + 2-iminoacetate + 5'-deoxyadenosine + L-methionine + H(+). The protein operates within cofactor biosynthesis; coenzyme F0 biosynthesis. Its function is as follows. Catalyzes the radical-mediated synthesis of 5-amino-5-(4-hydroxybenzyl)-6-(D-ribitylimino)-5,6-dihydrouracil from 5-amino-6-(D-ribitylamino)uracil and L-tyrosine. This chain is 5-amino-6-(D-ribitylamino)uracil--L-tyrosine 4-hydroxyphenyl transferase, found in Cyanothece sp. (strain PCC 7425 / ATCC 29141).